We begin with the raw amino-acid sequence, 2319 residues long: AT-rich interactive domain-containing protein 1B (2319 aa).

Low complexity-rich tracts occupy residues 1 to 21 (MAAR…ARAG) and 43 to 56 (GARG…APGP). 6 disordered regions span residues 1-74 (MAAR…VHHH), 155-306 (VGEA…GGGG), 321-414 (APAS…GAGA), 487-546 (RFAG…AGAA), 577-1062 (QQRS…LMNT), and 1085-1129 (DMMS…KITK). An N-acetylalanine modification is found at Ala2. Residues 57 to 68 (MLGGGGDGGGGL) show a composition bias toward gly residues. Residues 165-188 (QQHHHHHHAHHHHHHAHHLHHHHA) are compositionally biased toward basic residues. Composition is skewed to low complexity over residues 189 to 215 (LQQQ…QQQH) and 343 to 363 (SPGM…PGSM). Over residues 365–379 (PLQNSHEGYPNSQCN) the composition is skewed to polar residues. Residues 388–414 (GAGGGGGGGGGGGGGSGGGGGGGGAGA) are compositionally biased toward gly residues. Arg487 is subject to Asymmetric dimethylarginine. The segment covering 489 to 510 (AGQNQHPSGATPTLNQLLTSPS) has biased composition (polar residues). The LXXLL motif lies at 502-506 (LNQLL). Residues 536 to 546 (PQSQAAAAGAA) show a composition bias toward low complexity. Phosphoserine is present on residues Ser585 and Ser599. Arg608 bears the Asymmetric dimethylarginine mark. Low complexity predominate over residues 620-630 (SQPQQSSPYPG). Arg640 carries the asymmetric dimethylarginine modification. Composition is skewed to low complexity over residues 651-670 (GAMA…YGQQ), 677-687 (QQGQQPYYSQQ), 695-712 (PQAQ…QPQQ), 767-783 (SSAV…GDQS), 811-832 (GSPV…IPGS), and 840-849 (GSQSESSSHP). A compositionally biased stretch (polar residues) spans 866–880 (TQRNPQMAQYGPQQT). The span at 881-892 (GPSMSPHPSPGG) shows a compositional bias: low complexity. Composition is skewed to polar residues over residues 899–923 (SSFQ…QGNY) and 947–958 (SANNQMHGQGPS). Low complexity-rich tracts occupy residues 980-994 (PGNM…PGMS) and 1014-1028 (EAAA…NSAQ). Residues 1029-1062 (SRQGSFPGMNQSGLMASSSPYSQPMNNSSSLMNT) show a composition bias toward polar residues. Residues 1136–1227 (EPERKLWVDR…YLFAFECKIE (92 aa)) enclose the ARID domain. 4 disordered regions span residues 1230 to 1334 (EEPP…QQGM), 1346 to 1443 (EPNK…PNYK), 1475 to 1647 (NQYG…FLPS), and 1782 to 1852 (DHNA…KQAS). 2 stretches are compositionally biased toward polar residues: residues 1254–1273 (ANSG…SNSM) and 1287–1304 (STPH…SSTI). The segment covering 1305 to 1319 (SVHDPFSDVSDSSFP) has biased composition (low complexity). 2 stretches are compositionally biased toward polar residues: residues 1320–1334 (KRNS…QQGM) and 1364–1388 (PFMT…SGAM). Positions 1426–1440 (PPYGGHQPGLYPQQP) are enriched in low complexity. A Nuclear localization signal motif is present at residues 1441-1460 (NYKRHMDGMYGPPAKRHEGD). Composition is skewed to polar residues over residues 1522–1534 (LQSS…QQNM) and 1579–1601 (ESQW…SMQP). A phosphoserine mark is found at Ser1625, Ser1638, and Ser1642. The segment covering 1627-1641 (ASFQRSLENRMSPSK) has biased composition (polar residues). A compositionally biased stretch (basic and acidic residues) spans 1782 to 1791 (DHNAARKDDS). At Ser1798 the chain carries Phosphoserine. Residues 1799–1823 (GKEEEDAECIDDDEEDEEDEEEDSE) are compositionally biased toward acidic residues. Basic and acidic residues predominate over residues 1842–1852 (ADPKEKPKQAS). Lys1860 bears the N6-acetyllysine mark. Disordered regions lie at residues 1904-1941 (FESK…QQEK) and 1954-1973 (RPGA…SSKF). The span at 1925–1940 (RKKEQEGKGDSEEQQE) shows a compositional bias: basic and acidic residues. The LXXLL signature appears at 2119–2123 (LDGLL).

As to quaternary structure, component of SWI/SNF chromatin remodeling complexes, in some of which it can be mutually exclusive with ARID1B/BAF250B. The canonical complex contains a catalytic subunit (either SMARCA4/BRG1/BAF190A or SMARCA2/BRM/BAF190B) and at least SMARCE1, ACTL6A/BAF53, SMARCC1/BAF155, SMARCC2/BAF170, and SMARCB1/SNF5/BAF47. Other subunits specific to each of the complexes may also be present permitting several possible combinations developmentally and tissue specific. Component of the BAF (SWI/SNF-A) complex, which includes at least actin (ACTB), ARID1A/BAF250A, ARID1B/BAF250B, SMARCA2/BRM, SMARCA4/BRG1/BAF190A, ACTL6A/BAF53, ACTL6B/BAF53B, SMARCE1/BAF57, SMARCC1/BAF155, SMARCC2/BAF170, SMARCB1/SNF5/INI1, and one or more SMARCD1/BAF60A, SMARCD2/BAF60B, or SMARCD3/BAF60C. In muscle cells, the BAF complex also contains DPF3. Component of neural progenitors-specific chromatin remodeling complex (npBAF complex) composed of at least, ARID1A/BAF250A or ARID1B/BAF250B, SMARCD1/BAF60A, SMARCD3/BAF60C, SMARCA2/BRM/BAF190B, SMARCA4/BRG1/BAF190A, SMARCB1/BAF47, SMARCC1/BAF155, SMARCE1/BAF57, SMARCC2/BAF170, PHF10/BAF45A, ACTL6A/BAF53A and actin. Component of neuron-specific chromatin remodeling complex (nBAF complex) composed of at least, ARID1A/BAF250A or ARID1B/BAF250B, SMARCD1/BAF60A, SMARCD3/BAF60C, SMARCA2/BRM/BAF190B, SMARCA4/BRG1/BAF190A, SMARCB1/BAF47, SMARCC1/BAF155, SMARCE1/BAF57, SMARCC2/BAF170, DPF1/BAF45B, DPF3/BAF45C, ACTL6B/BAF53B and actin. Component of a SWI/SNF-like EBAFb complex, at least composed of SMARCA4/BRG1/BAF190A, SMARCB1/BAF47/SNF5, ACTL6A/BAF53A, SMARCE1/BAF57, SMARCD1/BAF60A, SMARCD2/BAF60B, SMARCC1/BAF155, SMARCC2/BAF170, ARID1B/BAF250B, MLLT1/ENL and actin. Interacts through its C-terminus with SMARCA2/BRM/BAF190B and SMARCA4/BRG1/BAF190A. Interacts with SMARCC1/BAF155. In terms of tissue distribution, widely expressed with high levels in heart, skeletal muscle and kidney.

It is found in the nucleus. Involved in transcriptional activation and repression of select genes by chromatin remodeling (alteration of DNA-nucleosome topology). Component of SWI/SNF chromatin remodeling complexes that carry out key enzymatic activities, changing chromatin structure by altering DNA-histone contacts within a nucleosome in an ATP-dependent manner. Belongs to the neural progenitors-specific chromatin remodeling complex (npBAF complex) and the neuron-specific chromatin remodeling complex (nBAF complex). During neural development a switch from a stem/progenitor to a postmitotic chromatin remodeling mechanism occurs as neurons exit the cell cycle and become committed to their adult state. The transition from proliferating neural stem/progenitor cells to postmitotic neurons requires a switch in subunit composition of the npBAF and nBAF complexes. As neural progenitors exit mitosis and differentiate into neurons, npBAF complexes which contain ACTL6A/BAF53A and PHF10/BAF45A, are exchanged for homologous alternative ACTL6B/BAF53B and DPF1/BAF45B or DPF3/BAF45C subunits in neuron-specific complexes (nBAF). The npBAF complex is essential for the self-renewal/proliferative capacity of the multipotent neural stem cells. The nBAF complex along with CREST plays a role regulating the activity of genes essential for dendrite growth. Binds DNA non-specifically. The sequence is that of AT-rich interactive domain-containing protein 1B from Homo sapiens (Human).